A 422-amino-acid polypeptide reads, in one-letter code: Dihydroorotase (422 aa).

Residues His-59 and His-61 each contribute to the Zn(2+) site. Substrate is bound by residues 61–63 (HFR) and Asn-93. Zn(2+)-binding residues include Asp-150, His-177, and His-230. Position 276 (Asn-276) interacts with substrate. Asp-303 lines the Zn(2+) pocket. Asp-303 is an active-site residue. His-307 provides a ligand contact to substrate.

Belongs to the metallo-dependent hydrolases superfamily. DHOase family. Class I DHOase subfamily. Zn(2+) is required as a cofactor.

It catalyses the reaction (S)-dihydroorotate + H2O = N-carbamoyl-L-aspartate + H(+). It functions in the pathway pyrimidine metabolism; UMP biosynthesis via de novo pathway; (S)-dihydroorotate from bicarbonate: step 3/3. Its function is as follows. Catalyzes the reversible cyclization of carbamoyl aspartate to dihydroorotate. The sequence is that of Dihydroorotase from Streptococcus thermophilus (strain CNRZ 1066).